Here is a 200-residue protein sequence, read N- to C-terminus: Kunitz type trypsin inhibitor 111 (200 aa).

Residues 1–24 (MSTISFTIFILANVWLLVVTTSIA) form the signal peptide. Cystine bridges form between Cys-62-Cys-108, Cys-160-Cys-172, and Cys-165-Cys-168.

The protein belongs to the protease inhibitor I3 (leguminous Kunitz-type inhibitor) family. As to quaternary structure, interacts with SCP1.

It is found in the secreted. Its subcellular location is the extracellular space. The protein resides in the apoplast. This is Kunitz type trypsin inhibitor 111 (KPI111) from Medicago truncatula (Barrel medic).